The primary structure comprises 339 residues: MLTTTIIAGIISFILTILAMPFFIRFYQLKKINGQQMHEDVKQHLAKAGTPTMGGTVFLLVAALVTFICAFVLHITGGPAFGATLAILFIVLIYGTIGFLDDFLKIFKKINQGLTAWQKMALQLIGGLVFYLVHVKPSGTDSLNLFGFPLHLGVFYIIFILFWVVGFSNAVNLTDGIDGLASISVVISLLTYSVIAYVQNQFDVLLIIISMVGALLGFFVYNHKPAKVFMGDVGSLALGAMLAAISITLRQEWTLLIIGIVYVLETASVMLQVSYFKWTKKRKGEGQRIFRMTPFHHHLELGGLRLRESGKKWSEWQVDFFLWSIGLLGSLLILAILYL.

The next 10 membrane-spanning stretches (helical) occupy residues 4–24 (TTII…PFFI), 53–73 (MGGT…AFVL), 80–100 (AFGA…IGFL), 113–133 (GLTA…FYLV), 145–165 (LFGF…FWVV), 176–196 (GIDG…SVIA), 202–222 (FDVL…FVYN), 228–248 (VFMG…ISIT), 253–273 (WTLL…MLQV), and 318–338 (VDFF…AILY).

This sequence belongs to the glycosyltransferase 4 family. MraY subfamily. The cofactor is Mg(2+).

The protein localises to the cell membrane. The catalysed reaction is UDP-N-acetyl-alpha-D-muramoyl-L-alanyl-gamma-D-glutamyl-L-lysyl-D-alanyl-D-alanine + di-trans,octa-cis-undecaprenyl phosphate = Mur2Ac(oyl-L-Ala-gamma-D-Glu-L-Lys-D-Ala-D-Ala)-di-trans,octa-cis-undecaprenyl diphosphate + UMP. The protein operates within cell wall biogenesis; peptidoglycan biosynthesis. In terms of biological role, catalyzes the initial step of the lipid cycle reactions in the biosynthesis of the cell wall peptidoglycan: transfers peptidoglycan precursor phospho-MurNAc-pentapeptide from UDP-MurNAc-pentapeptide onto the lipid carrier undecaprenyl phosphate, yielding undecaprenyl-pyrophosphoryl-MurNAc-pentapeptide, known as lipid I. The sequence is that of Phospho-N-acetylmuramoyl-pentapeptide-transferase from Streptococcus mutans serotype c (strain ATCC 700610 / UA159).